We begin with the raw amino-acid sequence, 223 residues long: MIITIDALLDAAQLNKIQSSLQTAEFIDGRATAGWHAQLVKQNQQLSRTSTLAKSLQEIVQTALQNNALFEAAAYPQRVHSLLFSRYEPGMEYGRHVDNALMGSGDRRDRADLSFTLFLSDPDRYIGGALVIEGACDEQAYRLPAGSLLLYPSSTLHRVDPVEQGYRFACVGWVQSWIRDPAKRELLFDLDTARRSLFTREGKSIEFDLLSKTYANLLRRWSE.

The region spanning 78-176 is the Fe2OG dioxygenase domain; that stretch reads RVHSLLFSRY…RFACVGWVQS (99 aa). 3 residues coordinate Fe cation: His-96, Asp-98, and His-157. Residue Arg-167 participates in 2-oxoglutarate binding.

It depends on Fe(2+) as a cofactor. L-ascorbate is required as a cofactor.

The polypeptide is PKHD-type hydroxylase syc1482_d (Synechococcus sp. (strain ATCC 27144 / PCC 6301 / SAUG 1402/1) (Anacystis nidulans)).